Here is a 155-residue protein sequence, read N- to C-terminus: 3-hydroxyacyl-[acyl-carrier-protein] dehydratase FabZ (155 aa).

Histidine 58 is a catalytic residue.

This sequence belongs to the thioester dehydratase family. FabZ subfamily.

It localises to the cytoplasm. It catalyses the reaction a (3R)-hydroxyacyl-[ACP] = a (2E)-enoyl-[ACP] + H2O. Involved in unsaturated fatty acids biosynthesis. Catalyzes the dehydration of short chain beta-hydroxyacyl-ACPs and long chain saturated and unsaturated beta-hydroxyacyl-ACPs. This chain is 3-hydroxyacyl-[acyl-carrier-protein] dehydratase FabZ, found in Rhizobium leguminosarum bv. trifolii (strain WSM2304).